The chain runs to 301 residues: Tyrosine recombinase XerC (301 aa).

One can recognise a Core-binding (CB) domain in the interval 1–89 (MGLDGLAAYL…SWRQYCVWLV (89 aa)). The 181-residue stretch at 110-290 (RVPKALPQEW…DFDHIARLYD (181 aa)) folds into the Tyr recombinase domain. Residues arginine 151, lysine 175, histidine 242, arginine 245, and histidine 268 contribute to the active site. Residue tyrosine 277 is the O-(3'-phospho-DNA)-tyrosine intermediate of the active site.

The protein belongs to the 'phage' integrase family. XerC subfamily. As to quaternary structure, forms a cyclic heterotetrameric complex composed of two molecules of XerC and two molecules of XerD.

The protein resides in the cytoplasm. Its function is as follows. Site-specific tyrosine recombinase, which acts by catalyzing the cutting and rejoining of the recombining DNA molecules. The XerC-XerD complex is essential to convert dimers of the bacterial chromosome into monomers to permit their segregation at cell division. It also contributes to the segregational stability of plasmids. The chain is Tyrosine recombinase XerC from Neisseria meningitidis serogroup B (strain ATCC BAA-335 / MC58).